Here is a 1956-residue protein sequence, read N- to C-terminus: Sodium channel protein type 10 subunit alpha (1956 aa).

At 1–125 the chain is on the cytoplasmic side; sequence MELPFASVGT…FNLIRRTAIK (125 aa). Positions 31–54 are disordered; that stretch reads HRAAKKARTKHRGQEDKGEKPRPQ. Positions 32 to 41 are enriched in basic residues; it reads RAAKKARTKH. A compositionally biased stretch (basic and acidic residues) spans 42–54; it reads RGQEDKGEKPRPQ. One copy of the I repeat lies at 116-404; that stretch reads FNLIRRTAIK…VTMAYEEQSQ (289 aa). Residues 126–149 form a helical membrane-spanning segment; the sequence is VSVHSWFSIFITITILVNCVCMTR. At 150 to 154 the chain is on the extracellular side; sequence TDLPE. Residues 155–174 traverse the membrane as a helical segment; the sequence is KVEYVFTVIYTFEALIKILA. At 175–187 the chain is on the cytoplasmic side; sequence RGFCLNEFTYLRD. The helical transmembrane segment at 188-206 threads the bilayer; sequence PWNWLDFSVITLAYVGAAI. Over 207 to 212 the chain is Extracellular; sequence DLRGIS. Residues 213–232 traverse the membrane as a helical; Voltage-sensor segment; it reads GLRTFRVLRALKTVSVIPGL. Residues 233 to 248 lie on the Cytoplasmic side of the membrane; that stretch reads KVIVGALIHSVRKLAD. Residues 249 to 272 traverse the membrane as a helical segment; sequence VTILTVFCLSVFALVGLQLFKGNL. Over 273 to 340 the chain is Extracellular; that stretch reads KNKCIRNGTD…PDFNYTSFDS (68 aa). Residues Cys276 and Cys318 are joined by a disulfide bond. Residues Asn279, Asn288, Asn311, and Asn334 are each glycosylated (N-linked (GlcNAc...) asparagine). Residues 341-365 constitute an intramembrane region (pore-forming); sequence FAWAFLSLFRLMTQDSWERLYQQTL. Residues 366 to 372 lie on the Extracellular side of the membrane; the sequence is RASGKMY. A helical membrane pass occupies residues 373–398; it reads MVFFVLVIFLGSFYLVNLILAVVTMA. Residues 399-658 are Cytoplasmic-facing; it reads YEEQSQATIA…KWRKFKMALF (260 aa). Ser440, Ser443, Ser466, and Ser478 each carry phosphoserine. Polar residues predominate over residues 441 to 453; that stretch reads LQSHSGSPLASKN. Disordered stretches follow at residues 441–484 and 537–581; these read LQSH…YNQR and LLGR…AGAP. A compositionally biased stretch (polar residues) spans 475 to 484; it reads SPQSDPYNQR. A phosphoserine mark is found at Ser611 and Ser614. The II repeat unit spans residues 646 to 910; the sequence is CCPKWRKFKM…EDDGEVNNLQ (265 aa). The helical transmembrane segment at 659 to 683 threads the bilayer; it reads ELVTDPFAELTITLCIVVNTVFMAM. Residues 684 to 694 are Extracellular-facing; it reads EHYPMTDAFDA. A helical membrane pass occupies residues 695 to 718; the sequence is MLQAGNIVFTVFFTMEMAFKIIAF. The Cytoplasmic portion of the chain corresponds to 719 to 726; it reads DPYYYFQK. The chain crosses the membrane as a helical span at residues 727–746; sequence KWNIFDCVIVTVSLLELSAS. Residues 747–752 lie on the Extracellular side of the membrane; it reads KKGSLS. A helical; Voltage-sensor transmembrane segment spans residues 753–772; sequence VLRTFRLLRVFKLAKSWPTL. At 773–788 the chain is on the cytoplasmic side; the sequence is NTLIKIIGNSVGALGN. A helical membrane pass occupies residues 789–809; the sequence is LTFILAIIVFIFALVGKQLLS. Topologically, residues 810-833 are extracellular; it reads EDYGCRKDGVSVWNGEKLRWHMCD. The pore-forming intramembrane region spans 834–854; the sequence is FFHSFLVVFRILCGEWIENMW. Topologically, residues 855–863 are extracellular; the sequence is VCMEVSQKS. Cys856 and Cys865 are disulfide-bonded. A helical transmembrane segment spans residues 864–889; it reads ICLILFLTVMVLGNLVVLNLFIALLL. Over 890 to 1148 the chain is Cytoplasmic; the sequence is NSFSADNLTA…GWQVRKTCYR (259 aa). The interval 1008 to 1094 is disordered; the sequence is DELEEDMEQA…SEGSTVDCPD (87 aa). One copy of the III repeat lies at 1141–1450; that stretch reads QVRKTCYRIV…KKYYNAMKKL (310 aa). A helical transmembrane segment spans residues 1149–1172; it reads IVEHSWFESFIIFMILLSSGALAF. Topologically, residues 1173-1185 are extracellular; it reads EDNYLEEKPRVKS. A helical membrane pass occupies residues 1186–1211; that stretch reads VLEYTDRVFTFIFVFEMLLKWVAYGF. Residues 1212 to 1217 lie on the Cytoplasmic side of the membrane; sequence KKYFTN. A helical transmembrane segment spans residues 1218-1239; it reads AWCWLDFLIVNISLTSLIAKIL. The Extracellular portion of the chain corresponds to 1240-1243; the sequence is EYSD. A helical; Voltage-sensor membrane pass occupies residues 1244–1265; that stretch reads VASIKALRTLRALRPLRALSRF. The Cytoplasmic portion of the chain corresponds to 1266-1284; that stretch reads EGMRVVVDALVGAIPSIMN. Residues 1285-1312 traverse the membrane as a helical segment; the sequence is VLLVCLIFWLIFSIMGVNLFAGKFSKCV. The Extracellular portion of the chain corresponds to 1313–1354; it reads DTRNNPFSNVNSTMVNNKSECHNQNSTGHFFWVNVKVNFDNV. N-linked (GlcNAc...) asparagine glycans are attached at residues Asn1323, Asn1329, and Asn1337. The pore-forming intramembrane region spans 1355-1376; that stretch reads AMGYLALLQVATFKGWMDIMYA. The Extracellular segment spans residues 1377–1392; sequence AVDSGEINSQPNWENN. Residues 1393-1419 traverse the membrane as a helical segment; that stretch reads LYMYLYFVVFIIFGGFFTLNLFVGVII. Over 1420–1472 the chain is Cytoplasmic; the sequence is DNFNQQKKKLGGQDIFMTEEQKKYYNAMKKLGSKKPQKPIPRPLNKYQGFVFD. Position 1452 is a phosphoserine; by PKC (Ser1452). Residues 1459–1758 form an IV repeat; the sequence is IPRPLNKYQG…WEKFDPEATQ (300 aa). Residues 1473-1496 form a helical membrane-spanning segment; it reads IVTRQAFDIIIMVLICLNMITMMV. The Extracellular portion of the chain corresponds to 1497–1507; it reads ETDEQGEEKTK. A helical membrane pass occupies residues 1508-1531; it reads VLGRINQFFVAVFTGECVMKMFAL. Over 1532-1537 the chain is Cytoplasmic; the sequence is RQYYFT. The chain crosses the membrane as a helical span at residues 1538-1561; the sequence is NGWNVFDFIVVILSIGSLLFSAIL. The Extracellular portion of the chain corresponds to 1562 to 1573; that stretch reads KSLENYFSPTLF. A helical; Voltage-sensor transmembrane segment spans residues 1574–1595; that stretch reads RVIRLARIGRILRLIRAAKGIR. Topologically, residues 1596 to 1610 are cytoplasmic; that stretch reads TLLFALMMSLPALFN. Residues 1611-1633 form a helical membrane-spanning segment; it reads IGLLLFLVMFIYSIFGMASFANV. The Extracellular segment spans residues 1634-1647; the sequence is VDEAGIDDMFNFKT. The pore-forming intramembrane region spans 1648–1670; the sequence is FGNSMLCLFQITTSAGWDGLLSP. Over 1671–1698 the chain is Extracellular; it reads ILNTGPPYCDPNLPNSNGSRGNCGSPAV. N-linked (GlcNAc...) asparagine glycosylation is present at Asn1687. A helical membrane pass occupies residues 1699–1723; it reads GIIFFTTYIIISFLIVVNMYIAVIL. The Cytoplasmic segment spans residues 1724 to 1956; that stretch reads ENFNVATEES…AKEGNSPGPQ (233 aa). In terms of domain architecture, IQ spans 1852 to 1881; it reads EDLSATVIQKAYRSYMLHRSLTLSNTLHVP. Residues 1906-1956 are disordered; the sequence is DKSETASATSFPPSYDSVTRGLSDRANINPSSSMQNEDEVAAKEGNSPGPQ. A compositionally biased stretch (polar residues) spans 1931-1940; that stretch reads ANINPSSSMQ.

The protein belongs to the sodium channel (TC 1.A.1.10) family. Nav1.8/SCN10A subfamily. The channel consists of an ion conducting pore forming alpha-subunit regulated by one or more associated auxiliary subunits SCN1B, SCN2B and SCN3B; electrophysiological properties may vary depending on the type of the associated beta subunits. Found in a number of complexes with PRX, DYNLT1 and PDZD2. Interacts with proteins such as FSTL1, PRX, DYNLT1, PDZD2, S100A10 and many others. Interacts with NEDD4 and NEDD4L. Ubiquitinated by NEDD4L; which promotes its endocytosis. In terms of processing, phosphorylation at Ser-1452 by PKC in a highly conserved cytoplasmic loop slows inactivation of the sodium channel and reduces peak sodium currents. Post-translationally, lacks the cysteine which covalently binds the conotoxin GVIIJ. This cysteine (position 815) is speculated in other sodium channel subunits alpha to be implied in covalent binding with the sodium channel subunit beta-2 or beta-4. Expressed in dorsal root ganglia, trigeminal ganglia, nodose ganglia and sciatic nerve.

The protein resides in the cell membrane. The enzyme catalyses Na(+)(in) = Na(+)(out). Tetrodotoxin-resistant channel that mediates the voltage-dependent sodium ion permeability of excitable membranes. Assuming opened or closed conformations in response to the voltage difference across the membrane, the protein forms a sodium-selective channel through which sodium ions may pass in accordance with their electrochemical gradient. Plays a role in neuropathic pain mechanisms. The chain is Sodium channel protein type 10 subunit alpha from Rattus norvegicus (Rat).